A 393-amino-acid polypeptide reads, in one-letter code: Digeranylgeranylglycerophospholipid reductase 2 (393 aa).

Positions 33, 44, 45, 47, 100, 124, 280, 292, and 293 each coordinate FAD.

This sequence belongs to the geranylgeranyl reductase family. DGGGPL reductase subfamily. The cofactor is FAD.

The catalysed reaction is a 2,3-bis-O-phytanyl-sn-glycerol 1-phospholipid + 8 A = a 2,3-bis-O-(geranylgeranyl)-sn-glycerol 1-phospholipid + 8 AH2. The enzyme catalyses 2,3-bis-O-(phytanyl)-sn-glycerol 1-phosphate + 8 A = 2,3-bis-O-(geranylgeranyl)-sn-glycerol 1-phosphate + 8 AH2. It catalyses the reaction CDP-2,3-bis-O-(geranylgeranyl)-sn-glycerol + 8 AH2 = CDP-2,3-bis-O-(phytanyl)-sn-glycerol + 8 A. It carries out the reaction archaetidylserine + 8 AH2 = 2,3-bis-O-phytanyl-sn-glycero-3-phospho-L-serine + 8 A. The protein operates within membrane lipid metabolism; glycerophospholipid metabolism. Is involved in the reduction of 2,3-digeranylgeranylglycerophospholipids (unsaturated archaeols) into 2,3-diphytanylglycerophospholipids (saturated archaeols) in the biosynthesis of archaeal membrane lipids. Catalyzes the formation of archaetidic acid (2,3-di-O-phytanyl-sn-glyceryl phosphate) from 2,3-di-O-geranylgeranylglyceryl phosphate (DGGGP) via the hydrogenation of each double bond of the isoprenoid chains. Is also probably able to reduce double bonds of geranyl groups in CDP-2,3-bis-O-(geranylgeranyl)-sn-glycerol and archaetidylserine, thus acting at various stages in the biosynthesis of archaeal membrane lipids. This Methanosphaera stadtmanae (strain ATCC 43021 / DSM 3091 / JCM 11832 / MCB-3) protein is Digeranylgeranylglycerophospholipid reductase 2.